The chain runs to 345 residues: Dihydroorotate dehydrogenase (quinone) (345 aa).

Residues A65 to K69 and T89 each bind FMN. Residue K69 participates in substrate binding. Substrate is bound at residue N114 to F118. FMN-binding residues include N146 and N179. N179 lines the substrate pocket. Catalysis depends on S182, which acts as the Nucleophile. Residue N184 participates in substrate binding. K224 and T252 together coordinate FMN. Residue N253–T254 coordinates substrate. Residues G275, G304, and Y325 to T326 contribute to the FMN site.

This sequence belongs to the dihydroorotate dehydrogenase family. Type 2 subfamily. As to quaternary structure, monomer. It depends on FMN as a cofactor.

The protein localises to the cell membrane. It carries out the reaction (S)-dihydroorotate + a quinone = orotate + a quinol. It participates in pyrimidine metabolism; UMP biosynthesis via de novo pathway; orotate from (S)-dihydroorotate (quinone route): step 1/1. Functionally, catalyzes the conversion of dihydroorotate to orotate with quinone as electron acceptor. The sequence is that of Dihydroorotate dehydrogenase (quinone) from Janthinobacterium sp. (strain Marseille) (Minibacterium massiliensis).